Reading from the N-terminus, the 357-residue chain is MPIVAHNDLPTFARLREEGQQILDPDFALHQDIRELHIGLLNMMPDAALAATERQFFRLIGESNQIAQFYVHPFTLKELERGPEARAHVERYYQSFDQIRADGLDALIITGANVTGPDLALEPFWEPLIEVVDWAYDNVCSTLCSCLATHAVMQFRYGERRRRLPAKRWGVFPHRVLARTHPLVADVNTCFDVPHSRFNDISHAQFVGAGLHVLVESEEAGVHLAVSPDGFRQVFFQGHPEYDTISLLKEYKREVGRFAAGARSDYPPFPDNYFGLQTRAILNEHRECVIRALDQGRKPPELPERLIAAALHNTWHDTAEGVIGNWMGLIYQITHHDRRQTFMAGIDPNDPLGLCCG.

C146 acts as the Acyl-thioester intermediate in catalysis. 2 residues coordinate substrate: K167 and S196. The active-site Proton acceptor is the H239. Residue E241 is part of the active site. R253 serves as a coordination point for substrate.

The protein belongs to the MetA family.

The protein localises to the cytoplasm. It carries out the reaction L-homoserine + succinyl-CoA = O-succinyl-L-homoserine + CoA. Its pathway is amino-acid biosynthesis; L-methionine biosynthesis via de novo pathway; O-succinyl-L-homoserine from L-homoserine: step 1/1. Functionally, transfers a succinyl group from succinyl-CoA to L-homoserine, forming succinyl-L-homoserine. This chain is Homoserine O-succinyltransferase, found in Allochromatium vinosum (strain ATCC 17899 / DSM 180 / NBRC 103801 / NCIMB 10441 / D) (Chromatium vinosum).